The chain runs to 112 residues: Tyrosine-protein phosphatase 8 (112 aa).

The region spanning 1–112 is the Tyrosine-protein phosphatase domain; that stretch reads ENSTAIVMIT…ANSEYGPVVV (112 aa).

It belongs to the protein-tyrosine phosphatase family.

The enzyme catalyses O-phospho-L-tyrosyl-[protein] + H2O = L-tyrosyl-[protein] + phosphate. The sequence is that of Tyrosine-protein phosphatase 8 (STY-8) from Styela plicata (Wrinkled sea squirt).